Consider the following 619-residue polypeptide: Calnexin (619 aa).

The signal sequence occupies residues 1-21 (MVNRKWMYIFIQFLLVSSIRS). Residue Asp109 participates in Ca(2+) binding. Cys152 and Cys186 form a disulfide bridge. 4 residues coordinate an alpha-D-glucoside: Tyr156, Lys158, Tyr177, and Asp184. The N-linked (GlcNAc...) asparagine glycan is linked to Asn203. The tract at residues 268 to 401 (IFDETDLKPV…RLIDNPNYFE (134 aa)) is p domain (Extended arm). 5 consecutive repeat copies span residues 270–282 (DETD…WDER), 287–299 (DESA…WDEN), 306–318 (DEAA…WNEE), 325–337 (DPEA…WDED), and 340–350 (GSWEAPLIDNP). 2 4 X approximate repeats regions span residues 270 to 337 (DETD…WDED) and 340 to 397 (GSWE…IDNP). Cys352 and Cys358 are disulfide-bonded. 3 tandem repeats follow at residues 359–369 (GTWKAPTIKNP), 373–383 (GKWIRPKISNP), and 387–397 (GKWTARLIDNP). Glu417 provides a ligand contact to an alpha-D-glucoside. Asp428 serves as a coordination point for Ca(2+). A helical membrane pass occupies residues 481-501 (LWAVYILCVLLPLVAIGVFCF). The disordered stretch occupies residues 538–619 (GDEEDDVNQP…AKRRTARRGD (82 aa)). Residues 547–557 (PGPSGSQSNPE) show a composition bias toward polar residues. Residues 566–577 (EQQSANSSQSSA) are compositionally biased toward low complexity. Asn571 carries N-linked (GlcNAc...) asparagine glycosylation. The span at 585 to 601 (HVVPENEPVKPTEEFAK) shows a compositional bias: basic and acidic residues. Residues 610 to 619 (AKRRTARRGD) show a composition bias toward basic residues.

The protein belongs to the calreticulin family. Post-translationally, glycosylation is important for its biological activity. Expressed ubiquitously in every blastomere of the embryo up to the gastrulation stage. Expression becomes gradually restricted to the head and tail regions at the comma stage during embryogenesis. During postembryonic development, expressed prominently in the H-shaped excretory cell, in the neurons of head (including ASK and ADL) and tail (including PHA and PHB), in the dorsal and ventral nerve cords, and in the spermatheca. Expressed in the spicules of the male tail (at protein level).

The protein resides in the endoplasmic reticulum membrane. The protein localises to the cytoplasm. Its subcellular location is the perinuclear region. It is found in the cytoplasmic vesicle. Calcium-binding protein that interacts with newly synthesized monoglucosylated glycoproteins in the endoplasmic reticulum. It may act in assisting protein assembly and/or in the retention within the ER of unassembled protein subunits. It seems to play a major role in the quality control apparatus of the ER by the retention of incorrectly folded proteins. Required for embryogenesis and larval development under heat and ER stress conditions. May be important for germ cell development. Involved in neuronal necrotic cell death. The polypeptide is Calnexin (cnx-1) (Caenorhabditis elegans).